A 256-amino-acid chain; its full sequence is Imidazole glycerol phosphate synthase subunit HisF (256 aa).

Catalysis depends on residues D11 and D130.

This sequence belongs to the HisA/HisF family. Heterodimer of HisH and HisF.

It localises to the cytoplasm. It carries out the reaction 5-[(5-phospho-1-deoxy-D-ribulos-1-ylimino)methylamino]-1-(5-phospho-beta-D-ribosyl)imidazole-4-carboxamide + L-glutamine = D-erythro-1-(imidazol-4-yl)glycerol 3-phosphate + 5-amino-1-(5-phospho-beta-D-ribosyl)imidazole-4-carboxamide + L-glutamate + H(+). The protein operates within amino-acid biosynthesis; L-histidine biosynthesis; L-histidine from 5-phospho-alpha-D-ribose 1-diphosphate: step 5/9. Its function is as follows. IGPS catalyzes the conversion of PRFAR and glutamine to IGP, AICAR and glutamate. The HisF subunit catalyzes the cyclization activity that produces IGP and AICAR from PRFAR using the ammonia provided by the HisH subunit. The sequence is that of Imidazole glycerol phosphate synthase subunit HisF from Thioalkalivibrio sulfidiphilus (strain HL-EbGR7).